The chain runs to 385 residues: Transcription termination factor 2, mitochondrial (385 aa).

Residues 1 to 35 (MSWRLLTGYQLCRLRLFRKPQPALKIRPSSVCVTY) constitute a mitochondrion transit peptide.

It belongs to the mTERF family. In terms of assembly, monomer.

Its subcellular location is the mitochondrion matrix. The protein localises to the mitochondrion nucleoid. Binds mitochondrial DNA and plays a role in the regulation of transcription of mitochondrial mRNA and rRNA species. This chain is Transcription termination factor 2, mitochondrial (Mterf2), found in Rattus norvegicus (Rat).